The chain runs to 1906 residues: Alpha-2-macroglobulin homolog (1906 aa).

Positions 1–21 (MIIRVCIRCFIVLTLVLGIGG) are cleaved as a signal peptide. Cys-22 is lipidated: N-palmitoyl cysteine. The S-diacylglycerol cysteine moiety is linked to residue Cys-22.

The protein belongs to the protease inhibitor I39 (alpha-2-macroglobulin) family. Bacterial alpha-2-macroglobulin subfamily.

The protein resides in the cell membrane. The chain is Alpha-2-macroglobulin homolog from Nostoc sp. (strain PCC 7120 / SAG 25.82 / UTEX 2576).